A 309-amino-acid polypeptide reads, in one-letter code: 1,2-phenylacetyl-CoA epoxidase, subunit A (309 aa).

Residues arginine 33, glutamine 37, 103–106 (KYSS), asparagine 132, methionine 193, 202–204 (SPN), lysine 214, and asparagine 218 contribute to the substrate site.

As to quaternary structure, forms a stable heterotetramer (dimer of heterodimers) with PaaC. Requires Fe cation as cofactor.

It carries out the reaction phenylacetyl-CoA + NADPH + O2 + H(+) = 2-(1,2-epoxy-1,2-dihydrophenyl)acetyl-CoA + NADP(+) + H2O. It participates in aromatic compound metabolism; phenylacetate degradation. Component of 1,2-phenylacetyl-CoA epoxidase multicomponent enzyme system which catalyzes the reduction of phenylacetyl-CoA (PA-CoA) to form 1,2-epoxyphenylacetyl-CoA. The subunit A is the catalytic subunit involved in the incorporation of one atom of molecular oxygen into phenylacetyl-CoA. The chain is 1,2-phenylacetyl-CoA epoxidase, subunit A (paaA) from Escherichia coli (strain K12).